The primary structure comprises 282 residues: Nucleotide-binding protein XCC2806 (282 aa).

Position 5–12 (5–12 (GLSGSGKS)) interacts with ATP. GTP is bound at residue 57–60 (DVRS).

This sequence belongs to the RapZ-like family.

Its function is as follows. Displays ATPase and GTPase activities. The polypeptide is Nucleotide-binding protein XCC2806 (Xanthomonas campestris pv. campestris (strain ATCC 33913 / DSM 3586 / NCPPB 528 / LMG 568 / P 25)).